A 535-amino-acid polypeptide reads, in one-letter code: Serum response factor-binding protein 1 (535 aa).

2 coiled-coil regions span residues 5–27 (LNLNNEVVKLRKDVKKVKVLIIR) and 107–177 (LKQK…EKCK). Composition is skewed to basic and acidic residues over residues 128 to 151 (AAEGEREREKDEPEQVTKIKETKK), 159 to 191 (KNTEEIKSAKEHVKEEKCKNLLEDSDKGTEKAL), 205 to 325 (AENK…ERPV), 361 to 376 (DKEKEYFDDSTEERFY), 406 to 432 (SDKDGSKQKEEKVPPTKEKAQTSEVQK), and 460 to 472 (TKRETNFRQERNK). Disordered regions lie at residues 128-435 (AAEG…KEIP) and 453-535 (TKPK…VFDD).

It localises to the cytoplasm. The protein localises to the perinuclear region. Functionally, may be involved in regulating transcriptional activation of cardiac genes during the aging process. May play a role in biosynthesis and/or processing of SLC2A4 in adipose cells. The protein is Serum response factor-binding protein 1 of Xenopus tropicalis (Western clawed frog).